A 211-amino-acid chain; its full sequence is Pyridoxine/pyridoxamine 5'-phosphate oxidase (211 aa).

Residues 7-10 and lysine 65 each bind substrate; that span reads RREY. Residues 60–65, 75–76, arginine 81, lysine 82, and glutamine 104 each bind FMN; these read RIVLLK and YT. Residues tyrosine 122, arginine 126, and serine 130 each coordinate substrate. Residues 139-140 and tryptophan 184 contribute to the FMN site; that span reads QS. Position 190 to 192 (190 to 192) interacts with substrate; the sequence is RLH. Arginine 194 contributes to the FMN binding site.

Belongs to the pyridoxamine 5'-phosphate oxidase family. In terms of assembly, homodimer. It depends on FMN as a cofactor.

The catalysed reaction is pyridoxamine 5'-phosphate + O2 + H2O = pyridoxal 5'-phosphate + H2O2 + NH4(+). It carries out the reaction pyridoxine 5'-phosphate + O2 = pyridoxal 5'-phosphate + H2O2. It functions in the pathway cofactor metabolism; pyridoxal 5'-phosphate salvage; pyridoxal 5'-phosphate from pyridoxamine 5'-phosphate: step 1/1. Its pathway is cofactor metabolism; pyridoxal 5'-phosphate salvage; pyridoxal 5'-phosphate from pyridoxine 5'-phosphate: step 1/1. Catalyzes the oxidation of either pyridoxine 5'-phosphate (PNP) or pyridoxamine 5'-phosphate (PMP) into pyridoxal 5'-phosphate (PLP). This is Pyridoxine/pyridoxamine 5'-phosphate oxidase from Vibrio cholerae serotype O1 (strain ATCC 39541 / Classical Ogawa 395 / O395).